The chain runs to 227 residues: Cytochrome c oxidase subunit 2 (227 aa).

Residues 1-14 (MAYPFQLGLQDATS) are Mitochondrial intermembrane-facing. Residues 15-45 (PIMEELTNFHDHTLMIVFLISSLVLYIISLM) form a helical membrane-spanning segment. At 46–59 (LTTKLTHTSTMDAQ) the chain is on the mitochondrial matrix side. The chain crosses the membrane as a helical span at residues 60 to 87 (EVETIWTILPAAILVLIALPSLRILYMM). The Mitochondrial intermembrane segment spans residues 88–227 (DEINNPALTV…YFENWSASMI (140 aa)). Residues His-161, Cys-196, Glu-198, Cys-200, His-204, and Met-207 each contribute to the Cu cation site. Residue Glu-198 coordinates Mg(2+). Tyr-218 is subject to Phosphotyrosine.

This sequence belongs to the cytochrome c oxidase subunit 2 family. In terms of assembly, component of the cytochrome c oxidase (complex IV, CIV), a multisubunit enzyme composed of 14 subunits. The complex is composed of a catalytic core of 3 subunits MT-CO1, MT-CO2 and MT-CO3, encoded in the mitochondrial DNA, and 11 supernumerary subunits COX4I, COX5A, COX5B, COX6A, COX6B, COX6C, COX7A, COX7B, COX7C, COX8 and NDUFA4, which are encoded in the nuclear genome. The complex exists as a monomer or a dimer and forms supercomplexes (SCs) in the inner mitochondrial membrane with NADH-ubiquinone oxidoreductase (complex I, CI) and ubiquinol-cytochrome c oxidoreductase (cytochrome b-c1 complex, complex III, CIII), resulting in different assemblies (supercomplex SCI(1)III(2)IV(1) and megacomplex MCI(2)III(2)IV(2)). Found in a complex with TMEM177, COA6, COX18, COX20, SCO1 and SCO2. Interacts with TMEM177 in a COX20-dependent manner. Interacts with COX20. Interacts with COX16. The cofactor is Cu cation.

The protein localises to the mitochondrion inner membrane. It catalyses the reaction 4 Fe(II)-[cytochrome c] + O2 + 8 H(+)(in) = 4 Fe(III)-[cytochrome c] + 2 H2O + 4 H(+)(out). In terms of biological role, component of the cytochrome c oxidase, the last enzyme in the mitochondrial electron transport chain which drives oxidative phosphorylation. The respiratory chain contains 3 multisubunit complexes succinate dehydrogenase (complex II, CII), ubiquinol-cytochrome c oxidoreductase (cytochrome b-c1 complex, complex III, CIII) and cytochrome c oxidase (complex IV, CIV), that cooperate to transfer electrons derived from NADH and succinate to molecular oxygen, creating an electrochemical gradient over the inner membrane that drives transmembrane transport and the ATP synthase. Cytochrome c oxidase is the component of the respiratory chain that catalyzes the reduction of oxygen to water. Electrons originating from reduced cytochrome c in the intermembrane space (IMS) are transferred via the dinuclear copper A center (CU(A)) of subunit 2 and heme A of subunit 1 to the active site in subunit 1, a binuclear center (BNC) formed by heme A3 and copper B (CU(B)). The BNC reduces molecular oxygen to 2 water molecules using 4 electrons from cytochrome c in the IMS and 4 protons from the mitochondrial matrix. The protein is Cytochrome c oxidase subunit 2 (MT-CO2) of Rhabdomys pumilio (Four-striped grass mouse).